The primary structure comprises 181 residues: Transcriptional repressor NrdR (181 aa).

The segment at 3–34 (CPYCQHTDSRVLESRSTGAGRSIRRRRECLSC) is a zinc-finger region. One can recognise an ATP-cone domain in the interval 49 to 139 (ISVIKRNGQS…VYRQFQGVDD (91 aa)).

This sequence belongs to the NrdR family. Requires Zn(2+) as cofactor.

Negatively regulates transcription of bacterial ribonucleotide reductase nrd genes and operons by binding to NrdR-boxes. This Picosynechococcus sp. (strain ATCC 27264 / PCC 7002 / PR-6) (Agmenellum quadruplicatum) protein is Transcriptional repressor NrdR.